Consider the following 955-residue polypeptide: Protein translocase subunit SecA (955 aa).

Residues glutamine 87, 105–109 (GEGKT), and aspartate 494 each bind ATP. The tract at residues 861 to 955 (AAPAPAAPRP…KKAPRTKRKR (95 aa)) is disordered. The span at 874-888 (QEAAQQAQGTAAPSA) shows a compositional bias: low complexity. A compositionally biased stretch (basic residues) spans 943-955 (SKGKKAPRTKRKR).

It belongs to the SecA family. As to quaternary structure, monomer and homodimer. Part of the essential Sec protein translocation apparatus which comprises SecA, SecYEG and auxiliary proteins SecDF. Other proteins may also be involved.

It localises to the cell membrane. The protein localises to the cytoplasm. It catalyses the reaction ATP + H2O + cellular proteinSide 1 = ADP + phosphate + cellular proteinSide 2.. Part of the Sec protein translocase complex. Interacts with the SecYEG preprotein conducting channel. Has a central role in coupling the hydrolysis of ATP to the transfer of proteins into and across the cell membrane, serving as an ATP-driven molecular motor driving the stepwise translocation of polypeptide chains across the membrane. The polypeptide is Protein translocase subunit SecA (Rhodococcus opacus (strain B4)).